The sequence spans 394 residues: Queuine tRNA-ribosyltransferase (394 aa).

The active-site Proton acceptor is the aspartate 99. Residues 99-103, aspartate 153, glutamine 195, and glycine 222 contribute to the substrate site; that span reads DSGGF. Residues 253 to 259 are RNA binding; it reads GVGHPED. The active-site Nucleophile is aspartate 272. The RNA binding; important for wobble base 34 recognition stretch occupies residues 277–281; it reads TRTGR. Residues cysteine 310, cysteine 312, cysteine 315, and histidine 341 each coordinate Zn(2+).

It belongs to the queuine tRNA-ribosyltransferase family. In terms of assembly, homodimer. Within each dimer, one monomer is responsible for RNA recognition and catalysis, while the other monomer binds to the replacement base PreQ1. It depends on Zn(2+) as a cofactor.

The catalysed reaction is 7-aminomethyl-7-carbaguanine + guanosine(34) in tRNA = 7-aminomethyl-7-carbaguanosine(34) in tRNA + guanine. It functions in the pathway tRNA modification; tRNA-queuosine biosynthesis. Its function is as follows. Catalyzes the base-exchange of a guanine (G) residue with the queuine precursor 7-aminomethyl-7-deazaguanine (PreQ1) at position 34 (anticodon wobble position) in tRNAs with GU(N) anticodons (tRNA-Asp, -Asn, -His and -Tyr). Catalysis occurs through a double-displacement mechanism. The nucleophile active site attacks the C1' of nucleotide 34 to detach the guanine base from the RNA, forming a covalent enzyme-RNA intermediate. The proton acceptor active site deprotonates the incoming PreQ1, allowing a nucleophilic attack on the C1' of the ribose to form the product. After dissociation, two additional enzymatic reactions on the tRNA convert PreQ1 to queuine (Q), resulting in the hypermodified nucleoside queuosine (7-(((4,5-cis-dihydroxy-2-cyclopenten-1-yl)amino)methyl)-7-deazaguanosine). The polypeptide is Queuine tRNA-ribosyltransferase (Deinococcus radiodurans (strain ATCC 13939 / DSM 20539 / JCM 16871 / CCUG 27074 / LMG 4051 / NBRC 15346 / NCIMB 9279 / VKM B-1422 / R1)).